A 323-amino-acid polypeptide reads, in one-letter code: Formimidoylglutamase (323 aa).

Residues histidine 131, aspartate 157, histidine 159, aspartate 161, cysteine 245, and aspartate 247 each contribute to the Mn(2+) site.

The protein belongs to the arginase family. Mn(2+) is required as a cofactor.

The catalysed reaction is N-formimidoyl-L-glutamate + H2O = formamide + L-glutamate. Its pathway is amino-acid degradation; L-histidine degradation into L-glutamate; L-glutamate from N-formimidoyl-L-glutamate (hydrolase route): step 1/1. In terms of biological role, catalyzes the conversion of N-formimidoyl-L-glutamate to L-glutamate and formamide. This chain is Formimidoylglutamase, found in Geobacillus kaustophilus (strain HTA426).